Here is a 428-residue protein sequence, read N- to C-terminus: 47 kDa outer membrane protein (428 aa).

Residues 1–25 (MAKTSKFTQTLLASALAVVAGSASA) form the signal peptide.

Belongs to the OmpP1/FadL family.

The protein localises to the cell outer membrane. This chain is 47 kDa outer membrane protein, found in Pasteurella multocida (strain Pm70).